The primary structure comprises 90 residues: Small ribosomal subunit protein bS16 (90 aa).

It belongs to the bacterial ribosomal protein bS16 family.

This is Small ribosomal subunit protein bS16 from Bacillus anthracis (strain A0248).